Here is a 382-residue protein sequence, read N- to C-terminus: 1-deoxy-D-xylulose 5-phosphate reductoisomerase (382 aa).

NADPH contacts are provided by Thr-11, Gly-12, Ser-13, Ile-14, and Asn-123. Residue Lys-124 participates in 1-deoxy-D-xylulose 5-phosphate binding. Glu-125 contacts NADPH. Asp-149 is a Mn(2+) binding site. The 1-deoxy-D-xylulose 5-phosphate site is built by Ser-150, Glu-151, Ser-173, and His-196. Position 151 (Glu-151) interacts with Mn(2+). Gly-202 is a binding site for NADPH. The 1-deoxy-D-xylulose 5-phosphate site is built by Ser-209, Asn-214, Lys-215, and Glu-218. A Mn(2+)-binding site is contributed by Glu-218.

It belongs to the DXR family. The cofactor is Mg(2+). Mn(2+) serves as cofactor.

The catalysed reaction is 2-C-methyl-D-erythritol 4-phosphate + NADP(+) = 1-deoxy-D-xylulose 5-phosphate + NADPH + H(+). Its pathway is isoprenoid biosynthesis; isopentenyl diphosphate biosynthesis via DXP pathway; isopentenyl diphosphate from 1-deoxy-D-xylulose 5-phosphate: step 1/6. Functionally, catalyzes the NADPH-dependent rearrangement and reduction of 1-deoxy-D-xylulose-5-phosphate (DXP) to 2-C-methyl-D-erythritol 4-phosphate (MEP). In Phocaeicola vulgatus (strain ATCC 8482 / DSM 1447 / JCM 5826 / CCUG 4940 / NBRC 14291 / NCTC 11154) (Bacteroides vulgatus), this protein is 1-deoxy-D-xylulose 5-phosphate reductoisomerase.